Reading from the N-terminus, the 563-residue chain is Arginine--tRNA ligase (563 aa).

The 'HIGH' region motif lies at 137–147; it reads ANPTGLLHMGN.

Belongs to the class-I aminoacyl-tRNA synthetase family. As to quaternary structure, monomer.

It is found in the cytoplasm. The catalysed reaction is tRNA(Arg) + L-arginine + ATP = L-arginyl-tRNA(Arg) + AMP + diphosphate. This Desulforudis audaxviator (strain MP104C) protein is Arginine--tRNA ligase.